Here is a 271-residue protein sequence, read N- to C-terminus: 3-methyl-2-oxobutanoate hydroxymethyltransferase (271 aa).

Residues D49 and D88 each contribute to the Mg(2+) site. 3-methyl-2-oxobutanoate contacts are provided by residues 49-50 (DS), D88, and K118. A Mg(2+)-binding site is contributed by E120. The active-site Proton acceptor is E187.

The protein belongs to the PanB family. As to quaternary structure, homodecamer; pentamer of dimers. It depends on Mg(2+) as a cofactor.

The protein localises to the cytoplasm. The catalysed reaction is 3-methyl-2-oxobutanoate + (6R)-5,10-methylene-5,6,7,8-tetrahydrofolate + H2O = 2-dehydropantoate + (6S)-5,6,7,8-tetrahydrofolate. The protein operates within cofactor biosynthesis; (R)-pantothenate biosynthesis; (R)-pantoate from 3-methyl-2-oxobutanoate: step 1/2. In terms of biological role, catalyzes the reversible reaction in which hydroxymethyl group from 5,10-methylenetetrahydrofolate is transferred onto alpha-ketoisovalerate to form ketopantoate. This is 3-methyl-2-oxobutanoate hydroxymethyltransferase from Bartonella tribocorum (strain CIP 105476 / IBS 506).